Here is a 365-residue protein sequence, read N- to C-terminus: Anhydro-N-acetylmuramic acid kinase (365 aa).

12–19 (GTSLDGID) is an ATP binding site.

The protein belongs to the anhydro-N-acetylmuramic acid kinase family.

It catalyses the reaction 1,6-anhydro-N-acetyl-beta-muramate + ATP + H2O = N-acetyl-D-muramate 6-phosphate + ADP + H(+). It functions in the pathway amino-sugar metabolism; 1,6-anhydro-N-acetylmuramate degradation. The protein operates within cell wall biogenesis; peptidoglycan recycling. Catalyzes the specific phosphorylation of 1,6-anhydro-N-acetylmuramic acid (anhMurNAc) with the simultaneous cleavage of the 1,6-anhydro ring, generating MurNAc-6-P. Is required for the utilization of anhMurNAc either imported from the medium or derived from its own cell wall murein, and thus plays a role in cell wall recycling. This is Anhydro-N-acetylmuramic acid kinase from Rhizorhabdus wittichii (strain DSM 6014 / CCUG 31198 / JCM 15750 / NBRC 105917 / EY 4224 / RW1) (Sphingomonas wittichii).